Consider the following 631-residue polypeptide: BTB/POZ domain-containing protein At1g67900 (631 aa).

The BTB domain occupies 28–93 (SDFTIEVSGS…CYGITITISA (66 aa)). The NPH3 domain occupies 200 to 509 (GWWAEDIAEL…VQVLFYEQAR (310 aa)). The segment at 361-399 (QTSPPTSPLRGKKGMMDRRRRSRSAENIDLEFQESRRSS) is disordered. Positions 370–382 (RGKKGMMDRRRRS) are enriched in basic residues. A Phosphotyrosine modification is found at Tyr-450. Ser-567 is subject to Phosphoserine.

This sequence belongs to the NPH3 family.

It functions in the pathway protein modification; protein ubiquitination. May act as a substrate-specific adapter of an E3 ubiquitin-protein ligase complex (CUL3-RBX1-BTB) which mediates the ubiquitination and subsequent proteasomal degradation of target proteins. In Arabidopsis thaliana (Mouse-ear cress), this protein is BTB/POZ domain-containing protein At1g67900.